Here is a 401-residue protein sequence, read N- to C-terminus: Rab-interacting lysosomal protein (401 aa).

The RH1 domain occupies proline 11–glutamate 101. Residues aspartate 75–glutamine 181 are a coiled coil. Disordered stretches follow at residues threonine 167–glycine 239 and lysine 304–histidine 388. The span at alanine 172 to glutamine 181 shows a compositional bias: basic and acidic residues. The region spanning glutamine 240–glutamate 316 is the RH2 domain. The tract at residues phenylalanine 272–proline 333 is necessary for interaction with RAB7A and RAB34, lysosomal distribution and morphology. A Phosphothreonine modification is found at threonine 308. Over residues glutamate 310–alanine 319 the composition is skewed to acidic residues. Residues serine 314 and serine 315 each carry the phosphoserine modification.

As to quaternary structure, homodimer. Interacts with RAB7A. Interacts with RAB34. Identified in a complex with MREG and DCTN1; interacts directly with MREG. Interacts with CLN3. Interacts with FLCN; the interaction is direct and promotes association between RILP and RAB34. As to expression, ubiquitous. Strongly expressed in fetal heart, heart, stomach, spleen, adrenal gland, thyroid gland, salivary gland, fetal liver, liver and lung. Poorly expressed in brain.

The protein localises to the late endosome membrane. Its subcellular location is the lysosome membrane. The protein resides in the cytoplasmic vesicle. It is found in the phagosome membrane. In terms of biological role, rab effector playing a role in late endocytic transport to degradative compartments. Involved in the regulation of lysosomal morphology and distribution. Induces recruitment of dynein-dynactin motor complexes to Rab7A-containing late endosome and lysosome compartments. Promotes centripetal migration of phagosomes and the fusion of phagosomes with the late endosomes and lysosomes. The polypeptide is Rab-interacting lysosomal protein (RILP) (Homo sapiens (Human)).